Reading from the N-terminus, the 487-residue chain is MKAQPKASHFIGGAFVEDKAGKPLPVIYPATGEEIASLYSATPGIIEAAYAAALKAQGEWAALKPVERGRILRRTAEILREKNRKLSKLETLDTGKALQETLVADAASAADALEFFGGIISGFNGEFVELGGSFAYTRREALGICVGIGAWNYPIQIAAWKSAPALAMGNAFIFKPSENTPLSALALAEAYKEAGLPDGLFNVVQGYGDVGAALVNHRLTAKVSLTGSVPTGRRIMAQAGEQLKHVTMELGGKSPLIVFDDADLESAIGGAMLGNFYSTGQVCSNGTRVFVHKNIRERFIERLVERTRKIRIGDPFDEATQMGPLISAAQRDKVLSYIKKGKAEGATLACGGGVPKLQGFDKGFFIEPTVFADVTDTMTIAREEIFGPVMSVLEFSDEDEVIARANDSEFGLAAGVFTADLSRGHHVIGQIKAGTCWINAYNLTPVEVPFGGYKQSGIGRENGIAALAHYSQIKTVYVEMGKVDSPY.

K(+) is bound by residues Ile27 and Asp93. NAD(+) is bound at residue 149 to 151 (GAW). Lys161 acts as the Charge relay system in catalysis. Residues 175-178 (KPSE) and 228-231 (SVPT) contribute to the NAD(+) site. A K(+)-binding site is contributed by Leu243. Glu249 serves as the catalytic Proton acceptor. NAD(+) is bound by residues Gly251, Cys283, and Glu384. Cys283 (nucleophile) is an active-site residue. Cys283 carries the cysteine sulfenic acid (-SOH) modification. Positions 454 and 457 each coordinate K(+). The active-site Charge relay system is the Glu461.

It belongs to the aldehyde dehydrogenase family. As to quaternary structure, dimer of dimers. K(+) is required as a cofactor.

The catalysed reaction is betaine aldehyde + NAD(+) + H2O = glycine betaine + NADH + 2 H(+). Its pathway is amine and polyamine biosynthesis; betaine biosynthesis via choline pathway; betaine from betaine aldehyde: step 1/1. In terms of biological role, involved in the biosynthesis of the osmoprotectant glycine betaine. Catalyzes the irreversible oxidation of betaine aldehyde to the corresponding acid. The protein is Betaine aldehyde dehydrogenase of Brucella abortus (strain S19).